The sequence spans 791 residues: Endonuclease MutS2 (791 aa).

337–344 serves as a coordination point for ATP; the sequence is GPNTGGKT. The disordered stretch occupies residues 689 to 715; the sequence is AAQASQKKPEKSVRSSRGLRSSRASSE. Low complexity predominate over residues 703-713; the sequence is SSRGLRSSRAS. The 76-residue stretch at 716 to 791 folds into the Smr domain; the sequence is LDLRGQRYEE…GTGATIVNLQ (76 aa).

This sequence belongs to the DNA mismatch repair MutS family. MutS2 subfamily. Homodimer. Binds to stalled ribosomes, contacting rRNA.

Functionally, endonuclease that is involved in the suppression of homologous recombination and thus may have a key role in the control of bacterial genetic diversity. In terms of biological role, acts as a ribosome collision sensor, splitting the ribosome into its 2 subunits. Detects stalled/collided 70S ribosomes which it binds and splits by an ATP-hydrolysis driven conformational change. Acts upstream of the ribosome quality control system (RQC), a ribosome-associated complex that mediates the extraction of incompletely synthesized nascent chains from stalled ribosomes and their subsequent degradation. Probably generates substrates for RQC. The sequence is that of Endonuclease MutS2 from Lactobacillus gasseri (strain ATCC 33323 / DSM 20243 / BCRC 14619 / CIP 102991 / JCM 1131 / KCTC 3163 / NCIMB 11718 / NCTC 13722 / AM63).